Here is a 387-residue protein sequence, read N- to C-terminus: 1,3-propanediol dehydrogenase (387 aa).

This sequence belongs to the iron-containing alcohol dehydrogenase family. Homooctamer. Requires Fe cation as cofactor.

It catalyses the reaction propane-1,3-diol + NAD(+) = 3-hydroxypropanal + NADH + H(+). With respect to regulation, inhibited by the metal chelator 1,10-phenanthroline. Its function is as follows. Catalyzes the reduction of 3-hydroxypropanal. Is considerably less active with glyceraldehyde, propionaldehyde, acetaldehyde, and butyraldehyde. Also catalyzes the oxidation of various primary, secondary, and tertiary alcohols. Is most active with substrates containing two primary alcohol groups separated by one or two carbon atoms. 1,3-propanediol is the preferred substrate. The sequence is that of 1,3-propanediol dehydrogenase from Citrobacter freundii.